A 103-amino-acid chain; its full sequence is Large ribosomal subunit protein bL21 (103 aa).

Belongs to the bacterial ribosomal protein bL21 family. As to quaternary structure, part of the 50S ribosomal subunit. Contacts protein L20.

This protein binds to 23S rRNA in the presence of protein L20. This chain is Large ribosomal subunit protein bL21, found in Ectopseudomonas mendocina (strain ymp) (Pseudomonas mendocina).